Reading from the N-terminus, the 407-residue chain is Carbamoyl phosphate synthase small chain (407 aa).

The interval 1-205 is CPSase; the sequence is MTETTSKTAP…LADGYGEQDT (205 aa). Serine 60, glycine 257, and glycine 259 together coordinate L-glutamine. The Glutamine amidotransferase type-1 domain occupies 209–397; the sequence is HVVALDFGVK…INLIREKKGE (189 aa). Catalysis depends on cysteine 286, which acts as the Nucleophile. L-glutamine-binding residues include leucine 287, glutamine 290, asparagine 328, glycine 330, and phenylalanine 331. Residues histidine 370 and glutamate 372 contribute to the active site.

Belongs to the CarA family. In terms of assembly, composed of two chains; the small (or glutamine) chain promotes the hydrolysis of glutamine to ammonia, which is used by the large (or ammonia) chain to synthesize carbamoyl phosphate. Tetramer of heterodimers (alpha,beta)4.

The enzyme catalyses hydrogencarbonate + L-glutamine + 2 ATP + H2O = carbamoyl phosphate + L-glutamate + 2 ADP + phosphate + 2 H(+). It carries out the reaction L-glutamine + H2O = L-glutamate + NH4(+). It participates in amino-acid biosynthesis; L-arginine biosynthesis; carbamoyl phosphate from bicarbonate: step 1/1. The protein operates within pyrimidine metabolism; UMP biosynthesis via de novo pathway; (S)-dihydroorotate from bicarbonate: step 1/3. Small subunit of the glutamine-dependent carbamoyl phosphate synthetase (CPSase). CPSase catalyzes the formation of carbamoyl phosphate from the ammonia moiety of glutamine, carbonate, and phosphate donated by ATP, constituting the first step of 2 biosynthetic pathways, one leading to arginine and/or urea and the other to pyrimidine nucleotides. The small subunit (glutamine amidotransferase) binds and cleaves glutamine to supply the large subunit with the substrate ammonia. In Brucella anthropi (strain ATCC 49188 / DSM 6882 / CCUG 24695 / JCM 21032 / LMG 3331 / NBRC 15819 / NCTC 12168 / Alc 37) (Ochrobactrum anthropi), this protein is Carbamoyl phosphate synthase small chain.